A 422-amino-acid chain; its full sequence is Serine--tRNA ligase (422 aa).

Residue 231 to 233 (TAE) participates in L-serine binding. 261-263 (RSE) provides a ligand contact to ATP. Glu284 serves as a coordination point for L-serine. 348-351 (EISS) contributes to the ATP binding site. Ser383 contributes to the L-serine binding site.

This sequence belongs to the class-II aminoacyl-tRNA synthetase family. Type-1 seryl-tRNA synthetase subfamily. In terms of assembly, homodimer. The tRNA molecule binds across the dimer.

The protein localises to the cytoplasm. It catalyses the reaction tRNA(Ser) + L-serine + ATP = L-seryl-tRNA(Ser) + AMP + diphosphate + H(+). It carries out the reaction tRNA(Sec) + L-serine + ATP = L-seryl-tRNA(Sec) + AMP + diphosphate + H(+). Its pathway is aminoacyl-tRNA biosynthesis; selenocysteinyl-tRNA(Sec) biosynthesis; L-seryl-tRNA(Sec) from L-serine and tRNA(Sec): step 1/1. Functionally, catalyzes the attachment of serine to tRNA(Ser). Is also able to aminoacylate tRNA(Sec) with serine, to form the misacylated tRNA L-seryl-tRNA(Sec), which will be further converted into selenocysteinyl-tRNA(Sec). The polypeptide is Serine--tRNA ligase (Mycoplasmopsis agalactiae (strain NCTC 10123 / CIP 59.7 / PG2) (Mycoplasma agalactiae)).